Here is a 251-residue protein sequence, read N- to C-terminus: Aquaporin TIP1-1 (251 aa).

Methionine 1 carries the N-acetylmethionine modification. The Cytoplasmic segment spans residues 1–23 (MPIRNIAIGRPDEATRPDALKAA). The helical transmembrane segment at 24–44 (LAEFISTLIFVVAGSGSGMAF) threads the bilayer. Residues 45–56 (NKLTENGATTPS) lie on the Vacuolar side of the membrane. A helical membrane pass occupies residues 57–77 (GLVAAAVAHAFGLFVAVSVGA). The Cytoplasmic segment spans residues 78 to 103 (NISGGHVNPAVTFGAFIGGNITLLRG). The NPA 1 motif lies at 85 to 87 (NPA). Residues 104–124 (ILYWIAQLLGSVVACLILKFA) traverse the membrane as a helical segment. Residues 125–143 (TGGLAVPAFGLSAGVGVLN) lie on the Vacuolar side of the membrane. The chain crosses the membrane as a helical span at residues 144 to 164 (AFVFEIVMTFGLVYTVYATAI). The Cytoplasmic portion of the chain corresponds to 165 to 172 (DPKNGSLG). The chain crosses the membrane as a helical span at residues 173–193 (TIAPIAIGFIVGANILAGGAF). The Vacuolar segment spans residues 194 to 218 (SGASMNPAVAFGPAVVSWTWTNHWV). An NPA 2 motif is present at residues 199–201 (NPA). The chain crosses the membrane as a helical span at residues 219 to 239 (YWAGPLVGGGIAGLIYEVFFI). Over 240–251 (NTTHEQLPTTDY) the chain is Cytoplasmic.

This sequence belongs to the MIP/aquaporin (TC 1.A.8) family. TIP (TC 1.A.8.10) subfamily. In terms of assembly, interacts with cucumber mosaic virus (CMV) Protein 1a. As to expression, in all the vegetative organs, but not in seeds. Preferentially expressed in roots.

Its subcellular location is the vacuole membrane. Water channel required to facilitate the transport of water, diffusion of amino acids and/or peptides from the vacuolar compartment to the cytoplasm. Does not promote glycerol permeability. May play a role in the control of cell turgor and cell expansion. Its function is impaired by Hg(2+). May be involved in a vesicle-based metabolite routing through or between pre-vacuolar compartments and the central vacuole. Transports urea in yeast cells in a pH-independent manner. Transports H(2)O(2) in yeast cells. This Arabidopsis thaliana (Mouse-ear cress) protein is Aquaporin TIP1-1 (TIP1-1).